Consider the following 523-residue polypeptide: MTNIHYHKILILDFGSQYTQLIARRVREIGVYCELWAWDVTEQQIREFAPTGIILSGSPESTTEENSPRAPEYVFNAGVPVLGICYGMQTMAMQLGGLTETSDHREFGYASVSLENSTALFANLNDNLTASEPKLDVWMSHGDKVTRLPENFKVTGTTLTCPIAAMSDESRRFYGVQFHPEVTHTKKGLELLTNFVVNICGCETKWTAENIIEDAVARIKEQVGDDEVILGLSGGVDSSVVALLLHRAIGKNLHCVFVDNGLLRLHEGDQVMEMFGDKFGLNITRVDAESRFLGELAGVSDPEAKRKIIGKVFVDVFDDESKKLTNVKWLAQGTIYPDVIESAASKTGKAHVIKSHHNVGGLPDYMKLGLVEPLRELFKDEVRKIGLALGLPAEMINRHPFPGPGLGVRVLGEVKKEYCDLLRRADAIFIEELRNSGWYEKTSQAFSVFLPVKSVGVMGDGRKYDWVISLRAVETIDFMTAHWAHLPYDLLGKVSNRIINEVNGISRVVYDISGKPPATIEWE.

The region spanning Lys8–Lys205 is the Glutamine amidotransferase type-1 domain. Catalysis depends on Cys85, which acts as the Nucleophile. Catalysis depends on residues His179 and Glu181. One can recognise a GMPS ATP-PPase domain in the interval Trp206–Arg398. Ser233–Ser239 contacts ATP.

In terms of assembly, homodimer.

The catalysed reaction is XMP + L-glutamine + ATP + H2O = GMP + L-glutamate + AMP + diphosphate + 2 H(+). The protein operates within purine metabolism; GMP biosynthesis; GMP from XMP (L-Gln route): step 1/1. Catalyzes the synthesis of GMP from XMP. The polypeptide is GMP synthase [glutamine-hydrolyzing] (guaA) (Haemophilus influenzae (strain ATCC 51907 / DSM 11121 / KW20 / Rd)).